A 365-amino-acid polypeptide reads, in one-letter code: Fructose-1,6-bisphosphate aldolase/phosphatase (365 aa).

The active-site Proton acceptor; for FBP phosphatase activity is the aspartate 11. Positions 11, 18, 52, and 53 each coordinate Mg(2+). Histidine 18 contributes to the beta-D-fructose 1,6-bisphosphate binding site. Histidine 18 is a binding site for dihydroxyacetone phosphate. Beta-D-fructose 1,6-bisphosphate is bound at residue tyrosine 90. Glutamine 94 lines the Mg(2+) pocket. 103-104 (GN) provides a ligand contact to beta-D-fructose 1,6-bisphosphate. Aspartate 131 contributes to the Mg(2+) binding site. A beta-D-fructose 1,6-bisphosphate-binding site is contributed by lysine 132. Lysine 132 serves as a coordination point for dihydroxyacetone phosphate. Tyrosine 228 (proton donor/acceptor; for FBP aldolase activity) is an active-site residue. Mg(2+) is bound by residues lysine 231, aspartate 232, and aspartate 233. Residue lysine 231 is the Schiff-base intermediate with DHAP; for FBP aldolase activity of the active site. Beta-D-fructose 1,6-bisphosphate contacts are provided by residues 241–242 (QS), arginine 265, aspartate 286, and tyrosine 347. Residues arginine 265 and aspartate 286 each contribute to the dihydroxyacetone phosphate site.

It belongs to the FBP aldolase/phosphatase family. As to quaternary structure, homooctamer; dimer of tetramers. Requires Mg(2+) as cofactor.

It carries out the reaction beta-D-fructose 1,6-bisphosphate + H2O = beta-D-fructose 6-phosphate + phosphate. The enzyme catalyses beta-D-fructose 1,6-bisphosphate = D-glyceraldehyde 3-phosphate + dihydroxyacetone phosphate. It participates in carbohydrate biosynthesis; gluconeogenesis. Catalyzes two subsequent steps in gluconeogenesis: the aldol condensation of dihydroxyacetone phosphate (DHAP) and glyceraldehyde-3-phosphate (GA3P) to fructose-1,6-bisphosphate (FBP), and the dephosphorylation of FBP to fructose-6-phosphate (F6P). The polypeptide is Fructose-1,6-bisphosphate aldolase/phosphatase (Methanothermobacter marburgensis (strain ATCC BAA-927 / DSM 2133 / JCM 14651 / NBRC 100331 / OCM 82 / Marburg) (Methanobacterium thermoautotrophicum)).